Here is an 86-residue protein sequence, read N- to C-terminus: Putative defensin-like protein 234 (86 aa).

A signal peptide spans 1–26 (MRSATLLLVSCVLLSFILGNVKEVEA). Disulfide bonds link C34-C86, C44-C71, C52-C80, and C69-C82.

This sequence belongs to the DEFL family.

Its subcellular location is the secreted. This is Putative defensin-like protein 234 (SCRL14) from Arabidopsis thaliana (Mouse-ear cress).